A 306-amino-acid chain; its full sequence is Ornithine carbamoyltransferase (306 aa).

Carbamoyl phosphate contacts are provided by residues 53-56, Q80, R104, and 131-134; these read STRT and HPCQ. L-ornithine is bound by residues N162, D219, and 223–224; that span reads SM. Carbamoyl phosphate contacts are provided by residues 259-260 and R287; that span reads CL.

The protein belongs to the aspartate/ornithine carbamoyltransferase superfamily. OTCase family.

It localises to the cytoplasm. It catalyses the reaction carbamoyl phosphate + L-ornithine = L-citrulline + phosphate + H(+). The protein operates within amino-acid biosynthesis; L-arginine biosynthesis; L-arginine from L-ornithine and carbamoyl phosphate: step 1/3. In terms of biological role, reversibly catalyzes the transfer of the carbamoyl group from carbamoyl phosphate (CP) to the N(epsilon) atom of ornithine (ORN) to produce L-citrulline. The polypeptide is Ornithine carbamoyltransferase (Acinetobacter baylyi (strain ATCC 33305 / BD413 / ADP1)).